A 59-amino-acid polypeptide reads, in one-letter code: Preprotein translocase subunit SecG (59 aa).

Residues 1 to 35 (MPSSKKKKEDVPIASMAGLVRYYESEKEKVKISPK) lie on the Cytoplasmic side of the membrane. The helical transmembrane segment at 36 to 56 (VVVVASIVLIAGVIIASFIIP) threads the bilayer. Residues 57–59 (PPL) are Extracellular-facing.

Belongs to the SEC61-beta family. As to quaternary structure, component of the protein translocase complex. Heterotrimer consisting of alpha (SecY), beta (SecG) and gamma (SecE) subunits. Can form oligomers of the heterotrimer.

Its subcellular location is the cell membrane. Its function is as follows. Involved in protein export. The function of the beta subunit is unknown, but it may be involved in stabilization of the trimeric complex. The protein is Preprotein translocase subunit SecG of Sulfolobus acidocaldarius (strain ATCC 33909 / DSM 639 / JCM 8929 / NBRC 15157 / NCIMB 11770).